Reading from the N-terminus, the 538-residue chain is MLSRIEQELAQLGITNVKEIVHNPSYEQLFEEEMKPGLDGFEKGVLTNSGAVAVDTGIFTGRSPKDKYIVYDETTKDNVWWTSEAVKNDNKPMSQSTWENLKDVVTHQLSNKRLFVIDAFCGASKTHRLAVRIITEVAWQAHFVKNMFIRPTADELKVFEPNFVVMNGSKVTNPNWQAQGLNSENFVAFNLTERIQLIGGTWYGGEMKKGMFSMMNYLLPLKNVASMHCSANVGKEGDVAVFFGLSGTGKTTLSTDPKRKLIGDDEHGWDEHGVFNYEGGCYAKTINLSEENEPDIYRAIRRDALLENVVVAEDGSIDFADKSKTENTRVSYPIYHIDNIVEPVSKAGHAQKVIFLTADAFGVLPPVAKLTPEQTKYYFLSGFTAKLAGTERGITEPTPTFSACFGAAFLSLHPTKYAEVLVQRMEAAGSQAYLVNTGWNGTGKRISIKDTRGIIDAILDGSIEKATTHALPVFDLRVPDALPGVDTAILDPRDTYAEAAEWHAKAEDLAARFVKNFEKYTTNEEGKALVAAGPQLSK.

Arginine 62, tyrosine 203, and lysine 209 together coordinate substrate. Residues lysine 209, histidine 228, and 244-252 each bind ATP; that span reads GLSGTGKTT. Lysine 209 and histidine 228 together coordinate Mn(2+). Position 265 (aspartate 265) interacts with Mn(2+). ATP-binding positions include glutamate 293, arginine 329, 445-446, and threonine 451; that span reads RI. Arginine 329 provides a ligand contact to substrate.

This sequence belongs to the phosphoenolpyruvate carboxykinase (ATP) family. Monomer. It depends on Mn(2+) as a cofactor.

The protein localises to the cytoplasm. It catalyses the reaction oxaloacetate + ATP = phosphoenolpyruvate + ADP + CO2. Its pathway is carbohydrate biosynthesis; gluconeogenesis. Involved in the gluconeogenesis. Catalyzes the conversion of oxaloacetate (OAA) to phosphoenolpyruvate (PEP) through direct phosphoryl transfer between the nucleoside triphosphate and OAA. This Haemophilus ducreyi (strain 35000HP / ATCC 700724) protein is Phosphoenolpyruvate carboxykinase (ATP).